Consider the following 179-residue polypeptide: tRNA-splicing endonuclease (179 aa).

Catalysis depends on residues Tyr-115, His-123, and Lys-154.

Belongs to the tRNA-intron endonuclease family. Archaeal short subfamily. As to quaternary structure, homotetramer; although the tetramer contains four active sites, only two participate in the cleavage. Therefore, it should be considered as a dimer of dimers.

The enzyme catalyses pretRNA = a 3'-half-tRNA molecule with a 5'-OH end + a 5'-half-tRNA molecule with a 2',3'-cyclic phosphate end + an intron with a 2',3'-cyclic phosphate and a 5'-hydroxyl terminus.. Its function is as follows. Endonuclease that removes tRNA introns. Cleaves pre-tRNA at the 5'- and 3'-splice sites to release the intron. The products are an intron and two tRNA half-molecules bearing 2',3' cyclic phosphate and 5'-OH termini. Recognizes a pseudosymmetric substrate in which 2 bulged loops of 3 bases are separated by a stem of 4 bp. This Methanopyrus kandleri (strain AV19 / DSM 6324 / JCM 9639 / NBRC 100938) protein is tRNA-splicing endonuclease.